Reading from the N-terminus, the 1320-residue chain is Bifunctional protein PutA (1320 aa).

The proline dehydrogenase stretch occupies residues 228 to 574; that stretch reads LSRSLNRIIG…SFVNRIADAT (347 aa). Residues 653–1119 are aldehyde dehydrogenase; that stretch reads QPVADGEMTP…LAHRPPNALN (467 aa). Residues E883 and C917 contribute to the active site.

The protein in the N-terminal section; belongs to the proline dehydrogenase family. It in the C-terminal section; belongs to the aldehyde dehydrogenase family. FAD serves as cofactor.

It carries out the reaction L-proline + a quinone = (S)-1-pyrroline-5-carboxylate + a quinol + H(+). The catalysed reaction is L-glutamate 5-semialdehyde + NAD(+) + H2O = L-glutamate + NADH + 2 H(+). The protein operates within amino-acid degradation; L-proline degradation into L-glutamate; L-glutamate from L-proline: step 1/2. It participates in amino-acid degradation; L-proline degradation into L-glutamate; L-glutamate from L-proline: step 2/2. Oxidizes proline to glutamate for use as a carbon and nitrogen source and also function as a transcriptional repressor of the put operon. The protein is Bifunctional protein PutA (putA) of Salmonella typhimurium (strain LT2 / SGSC1412 / ATCC 700720).